We begin with the raw amino-acid sequence, 149 residues long: Glutamyl-tRNA(Gln) amidotransferase subunit C, mitochondrial (149 aa).

It belongs to the GatC family. In terms of assembly, subunit of the heterotrimeric GatCAB amidotransferase (AdT) complex, composed of A, B and C subunits.

Its subcellular location is the mitochondrion. The enzyme catalyses L-glutamyl-tRNA(Gln) + L-glutamine + ATP + H2O = L-glutaminyl-tRNA(Gln) + L-glutamate + ADP + phosphate + H(+). Allows the formation of correctly charged Gln-tRNA(Gln) through the transamidation of misacylated Glu-tRNA(Gln) in the mitochondria. The reaction takes place in the presence of glutamine and ATP through an activated gamma-phospho-Glu-tRNA(Gln). The protein is Glutamyl-tRNA(Gln) amidotransferase subunit C, mitochondrial of Trichoplax adhaerens (Trichoplax reptans).